The chain runs to 267 residues: Neuferricin (267 aa).

The signal sequence occupies residues 1 to 17 (MLKYLVALISMVLAVWT). Positions 53 to 150 (LLTKEQLSLY…RDYTPVGKLI (98 aa)) constitute a Cytochrome b5 heme-binding domain.

The protein belongs to the cytochrome b5 family. MAPR subfamily.

It is found in the secreted. Functionally, heme-binding protein which promotes neuronal but not astrocyte differentiation. In Danio rerio (Zebrafish), this protein is Neuferricin (cyb5d2).